The chain runs to 142 residues: Large ribosomal subunit protein uL11 (142 aa).

The protein belongs to the universal ribosomal protein uL11 family. In terms of assembly, part of the ribosomal stalk of the 50S ribosomal subunit. Interacts with L10 and the large rRNA to form the base of the stalk. L10 forms an elongated spine to which L12 dimers bind in a sequential fashion forming a multimeric L10(L12)X complex. One or more lysine residues are methylated.

In terms of biological role, forms part of the ribosomal stalk which helps the ribosome interact with GTP-bound translation factors. This chain is Large ribosomal subunit protein uL11, found in Bartonella bacilliformis (strain ATCC 35685 / KC583 / Herrer 020/F12,63).